Here is a 464-residue protein sequence, read N- to C-terminus: Cysteine--tRNA ligase (464 aa).

Cysteine 28 serves as a coordination point for Zn(2+). Positions proline 30–histidine 40 match the 'HIGH' region motif. Residues cysteine 205, histidine 230, and glutamate 234 each contribute to the Zn(2+) site. The 'KMSKS' region motif lies at lysine 263–serine 267. Lysine 266 is a binding site for ATP.

Belongs to the class-I aminoacyl-tRNA synthetase family. Zn(2+) serves as cofactor.

It localises to the cytoplasm. It catalyses the reaction tRNA(Cys) + L-cysteine + ATP = L-cysteinyl-tRNA(Cys) + AMP + diphosphate. The protein is Cysteine--tRNA ligase of Ignicoccus hospitalis (strain KIN4/I / DSM 18386 / JCM 14125).